A 539-amino-acid chain; its full sequence is GMP synthase [glutamine-hydrolyzing] (539 aa).

In terms of domain architecture, Glutamine amidotransferase type-1 spans 4-202 (KILILDFGSQ…VLQIAGCKPD (199 aa)). Catalysis depends on C81, which acts as the Nucleophile. Catalysis depends on residues H176 and E178. In terms of domain architecture, GMPS ATP-PPase spans 203–395 (WVMRDHIEEA…LGLPPEMVYR (193 aa)). 230 to 236 (SGGVDSS) is an ATP binding site.

Homodimer.

The enzyme catalyses XMP + L-glutamine + ATP + H2O = GMP + L-glutamate + AMP + diphosphate + 2 H(+). Its pathway is purine metabolism; GMP biosynthesis; GMP from XMP (L-Gln route): step 1/1. Its function is as follows. Catalyzes the synthesis of GMP from XMP. This chain is GMP synthase [glutamine-hydrolyzing], found in Cupriavidus taiwanensis (strain DSM 17343 / BCRC 17206 / CCUG 44338 / CIP 107171 / LMG 19424 / R1) (Ralstonia taiwanensis (strain LMG 19424)).